The following is a 268-amino-acid chain: NAC domain-containing protein 41 (268 aa).

An NAC domain is found at 15–160 (LPPGFRFHPT…NWVLCRVFLK (146 aa)). The DNA-binding element occupies 109–166 (VGMKKTLVFYKGKPPNGTRTNWVLHEYRLVDSQQDSLYGQNMNWVLCRVFLKKRSNSN). The interval 166–190 (NSKRKEDEKEEVENEKETETERERE) is disordered. The segment covering 180–190 (EKETETERERE) has biased composition (basic and acidic residues).

It is found in the nucleus. Its function is as follows. Transcription activator of the mannan synthase CSLA9. Recognizes and binds to DNA-specific sequence of CSLA9 promoter. This is NAC domain-containing protein 41 from Arabidopsis thaliana (Mouse-ear cress).